The primary structure comprises 65 residues: Large ribosomal subunit protein bL35 (65 aa).

Basic residues predominate over residues 1-16 (MPKQKTHRASAKRFKR). Positions 1-21 (MPKQKTHRASAKRFKRTGSGG) are disordered.

Belongs to the bacterial ribosomal protein bL35 family.

The chain is Large ribosomal subunit protein bL35 from Streptococcus pyogenes serotype M18 (strain MGAS8232).